The sequence spans 360 residues: Photosystem II protein D1 (360 aa).

3 consecutive transmembrane segments (helical) span residues 29–46 (YIGW…TATS), 118–133 (HFLL…EWEL), and 142–156 (WISV…AAAA). Residue His-118 coordinates chlorophyll a. Residue Tyr-126 coordinates pheophytin a. Positions 170 and 189 each coordinate [CaMn4O5] cluster. The chain crosses the membrane as a helical span at residues 197–218 (FHQLGVAGVFGGSLFSAMHGSL). Residue His-198 participates in chlorophyll a binding. Residues His-215 and 264–265 (SF) contribute to the a quinone site. Position 215 (His-215) interacts with Fe cation. Residue His-272 coordinates Fe cation. Residues 274–288 (FLGAWPVVGIWLTSM) form a helical membrane-spanning segment. [CaMn4O5] cluster is bound by residues His-332, Glu-333, Asp-342, and Ala-344. Positions 345 to 360 (SGDSCPVALVAPSING) are excised as a propeptide.

The protein belongs to the reaction center PufL/M/PsbA/D family. PSII is composed of 1 copy each of membrane proteins PsbA, PsbB, PsbC, PsbD, PsbE, PsbF, PsbH, PsbI, PsbJ, PsbK, PsbL, PsbM, PsbT, PsbX, PsbY, PsbZ, Psb30/Ycf12, at least 3 peripheral proteins of the oxygen-evolving complex and a large number of cofactors. It forms dimeric complexes. It depends on The D1/D2 heterodimer binds P680, chlorophylls that are the primary electron donor of PSII, and subsequent electron acceptors. It shares a non-heme iron and each subunit binds pheophytin, quinone, additional chlorophylls, carotenoids and lipids. D1 provides most of the ligands for the Mn4-Ca-O5 cluster of the oxygen-evolving complex (OEC). There is also a Cl(-1) ion associated with D1 and D2, which is required for oxygen evolution. The PSII complex binds additional chlorophylls, carotenoids and specific lipids. as a cofactor. In terms of processing, tyr-161 forms a radical intermediate that is referred to as redox-active TyrZ, YZ or Y-Z. C-terminally processed by CTPA; processing is essential to allow assembly of the oxygen-evolving complex and thus photosynthetic growth.

The protein localises to the plastid. It localises to the chloroplast thylakoid membrane. The enzyme catalyses 2 a plastoquinone + 4 hnu + 2 H2O = 2 a plastoquinol + O2. In terms of biological role, photosystem II (PSII) is a light-driven water:plastoquinone oxidoreductase that uses light energy to abstract electrons from H(2)O, generating O(2) and a proton gradient subsequently used for ATP formation. It consists of a core antenna complex that captures photons, and an electron transfer chain that converts photonic excitation into a charge separation. The D1/D2 (PsbA/PsbD) reaction center heterodimer binds P680, the primary electron donor of PSII as well as several subsequent electron acceptors. This chain is Photosystem II protein D1, found in Palmaria palmata (Dulse).